The sequence spans 916 residues: Protein translocase subunit SecA (916 aa).

ATP contacts are provided by residues Gln-87, 105–109 (GEGKT), and Asp-507. Zn(2+)-binding residues include Cys-900, Cys-902, Cys-911, and His-912.

Belongs to the SecA family. In terms of assembly, monomer and homodimer. Part of the essential Sec protein translocation apparatus which comprises SecA, SecYEG and auxiliary proteins SecDF-YajC and YidC. Zn(2+) serves as cofactor.

The protein resides in the cell inner membrane. It is found in the cytoplasm. It carries out the reaction ATP + H2O + cellular proteinSide 1 = ADP + phosphate + cellular proteinSide 2.. Part of the Sec protein translocase complex. Interacts with the SecYEG preprotein conducting channel. Has a central role in coupling the hydrolysis of ATP to the transfer of proteins into and across the cell membrane, serving both as a receptor for the preprotein-SecB complex and as an ATP-driven molecular motor driving the stepwise translocation of polypeptide chains across the membrane. In Neisseria meningitidis serogroup C (strain 053442), this protein is Protein translocase subunit SecA.